A 1186-amino-acid polypeptide reads, in one-letter code: Partner and localizer of BRCA2 (1186 aa).

The segment at 1 to 160 is required for its oligomerization and is important for its focal concentration at DNA damage sites; it reads MDEPPGKPLS…QKRTFISQER (160 aa). The interval 1–200 is interaction with RAD51; sequence MDEPPGKPLS…PVTEIRTHLL (200 aa). Residues 1 to 319 form an interaction with BRCA1 region; sequence MDEPPGKPLS…SKSGQLPTSS (319 aa). Residues 1–579 form a DNA-binding (with the preference D loop &gt; dsDNA &gt; ssDNA) region; the sequence is MDEPPGKPLS…EDSLSWSNSA (579 aa). A coiled-coil region spans residues 9-41; the sequence is LSCEEKEKLKEKLAFLKREYSKTLARLQRAQRA. 2 disordered regions span residues 52 to 72 and 95 to 157; these read VEEQ…HSEP and KTSI…TFIS. The span at 120-141 shows a compositional bias: basic and acidic residues; it reads RTDDTQEHFPHRVSDPSGEQKQ. The span at 143–152 shows a compositional bias: basic residues; sequence LPSRRKKQQK. Phosphoserine is present on residues S172 and S190. The segment at 252–273 is disordered; sequence TLSDSGSSQHLEHIPPKGSSEL. S285 carries the phosphoserine modification. The interval 346–365 is disordered; the sequence is KEQNQTEKSLKSPSDTLDGR. Residues S376 and S387 each carry the phosphoserine modification. The chAM (Chromatin-association motif); required for chromatin association, mediates nucleosome association stretch occupies residues 395–446; it reads SCTVPEGLLFPAEYYVRTTRSMSNCQRKVAVEAVIQSHLDVKKKGFKNKNKD. The interval 440-525 is disordered; sequence FKNKNKDASK…RKSACTPASD (86 aa). S454 is modified (phosphoserine). A compositionally biased stretch (polar residues) spans 467–488; that stretch reads GTCTGQPSSRTSQKLLSLTKVS. S660 is modified (phosphoserine). 2 disordered regions span residues 679-698 and 774-798; these read PGKS…KTGL and KQFD…QGQP. Polar residues predominate over residues 687–698; it reads PNSQSQHTKTGL. The segment at 775–1186 is required for interaction with POLH and POLH DNA synthesis stimulation; that stretch reads QFDSSGSPAK…DGNIFVYHYS (412 aa). S781 bears the Phosphoserine mark. Positions 853–1186 are interaction with RAD51, BRCA2 and POLH; it reads GNLQLVSELK…DGNIFVYHYS (334 aa). WD repeat units follow at residues 854–915, 917–961, 962–1009, 1010–1052, 1058–1109, 1115–1153, and 1155–1186; these read NLQL…WHFA, VPVL…QVLL, KSGN…LMPP, EETI…MHID, SVCH…MLYC, AGRF…LLPP, and SDQH…YHYS.

Homooligomer; dissociated upon DNA damage thus allowing association with BRCA1. Oligomerization is essential for its focal accumulation at DNA breaks. Part of a BRCA complex containing BRCA1, BRCA2 and PALB2. Interacts with BRCA1 and this interaction is essential for its function in HRR. Interacts with RAD51AP1 and MORF4L1/MRG15. Component of the homologous recombination repair (HR) complex composed of ERCC5/XPG, BRCA2, PALB2, DSS1 and RAD51. Within the complex, interacts with ERCC5/XPG and BRCA2. Interacts with BRCA2, RAD51C, RAD51 and XRCC3; the interactions are direct and it may serve as a scaffold for a HR complex containing PALB2, BRCA2, RAD51C, RAD51 and XRCC3. Interacts with POLH; the interaction is direct.

Its subcellular location is the nucleus. Plays a critical role in homologous recombination repair (HRR) through its ability to recruit BRCA2 and RAD51 to DNA breaks. Strongly stimulates the DNA strand-invasion activity of RAD51, stabilizes the nucleoprotein filament against a disruptive BRC3-BRC4 polypeptide and helps RAD51 to overcome the suppressive effect of replication protein A (RPA). Functionally cooperates with RAD51AP1 in promoting of D-loop formation by RAD51. Serves as the molecular scaffold in the formation of the BRCA1-PALB2-BRCA2 complex which is essential for homologous recombination. Via its WD repeats is proposed to scaffold a HR complex containing RAD51C and BRCA2 which is thought to play a role in HR-mediated DNA repair. Essential partner of BRCA2 that promotes the localization and stability of BRCA2. Also enables its recombinational repair and checkpoint functions of BRCA2. May act by promoting stable association of BRCA2 with nuclear structures, allowing BRCA2 to escape the effects of proteasome-mediated degradation. Binds DNA with high affinity for D loop, which comprises single-stranded, double-stranded and branched DNA structures. May play a role in the extension step after strand invasion at replication-dependent DNA double-strand breaks; together with BRCA2 is involved in both POLH localization at collapsed replication forks and DNA polymerization activity. This Homo sapiens (Human) protein is Partner and localizer of BRCA2 (PALB2).